Consider the following 523-residue polypeptide: Tubulin-specific chaperone E (523 aa).

A CAP-Gly domain is found at 31–75; it reads GEVSGHMGSWLGIEWDDGLRGKHNGIVDGKRYFQTQTPTGGSFIR. LRR repeat units follow at residues 155-180, 181-204, 209-232, 235-258, 260-284, 285-310, and 315-337; these read LTHLTTLNVSHTLIWNWEIVASIAQQ, LPSLTNLNLSSNRLVLPTSSQITE, FRQLKRINLRSCGFSDWKDVMHTA, WPNILSLGLQENSLGQLAEVDRTK, FKQLHELDLHRTNIMDFDQVTKLGN, LTTLRLLNIMENGIEEIKLPDCDSQE, and FVSLEQLNLLHNPIWNEADAFNE.

The protein belongs to the TBCE family.

It is found in the cytoplasm. Functionally, tubulin-folding protein which is required for the development of the neuronal microtubule network. Essential for the development and function of neuromuscular synapses. Likely to promote microtubule formation by acting in the negative regulation of the microtubule-severing protein spas. In Drosophila melanogaster (Fruit fly), this protein is Tubulin-specific chaperone E.